Here is a 335-residue protein sequence, read N- to C-terminus: Nucleoid-associated protein KPK_1538 (335 aa).

It belongs to the YejK family.

Its subcellular location is the cytoplasm. It is found in the nucleoid. The chain is Nucleoid-associated protein KPK_1538 from Klebsiella pneumoniae (strain 342).